The following is a 469-amino-acid chain: MSGNSGSNQMWGGRFAGGPSAIMREINASIPFDKALWRQDIAASKAHVDMLGAQGIVSAEDAALIASGLDQVAAEYEANGVPENWDLEDIHMTTESRLAELIGPAAGRLHTARSRNDQVATDFRLWVRDAMDQAELGLKQLQVALVSRAGEHAASIMPGFTHLQTAQPVTLGHHLMAYYEMIGRDRSRFADARVRMNRSPLGSAALAGTGFPIDRFRTAEALGFDGPTDNSLDSVSDRDFALDYLMAAAQCSLHLSRLAEEFIIWASQPFGFVTLPDSLSTGSSIMPQKKNPDAAELVRGHSGRIVGCLTALMITMKGLPLAYSKDMQDDKPPVFEAASLLALSIAAMTGMVAEAKFRTDRMRAAAELGYATATDLADWLVRQANIPFREAHHITGSAVKLAESRGIALDQLSIEDLKAIDERIDERVYAALSVEASVAARCSHGGTAPDEVRKRVAQARVALGLEESA.

It belongs to the lyase 1 family. Argininosuccinate lyase subfamily.

The protein resides in the cytoplasm. The catalysed reaction is 2-(N(omega)-L-arginino)succinate = fumarate + L-arginine. It participates in amino-acid biosynthesis; L-arginine biosynthesis; L-arginine from L-ornithine and carbamoyl phosphate: step 3/3. This is Argininosuccinate lyase from Novosphingobium aromaticivorans (strain ATCC 700278 / DSM 12444 / CCUG 56034 / CIP 105152 / NBRC 16084 / F199).